The following is a 420-amino-acid chain: Septin-8-A (420 aa).

The 267-residue stretch at 39 to 305 (QGFCFNILCV…ELYRRCKLEE (267 aa)) folds into the Septin-type G domain. The segment at 49–56 (GETGIGKS) is G1 motif. GTP-binding positions include 49-56 (GETGIGKS), G104, 185-193 (KADTISKSE), G239, and R254. The tract at residues 101 to 104 (DTVG) is G3 motif. A G4 motif region spans residues 184–187 (AKAD). Residues 321–407 (QETYEAKRKE…RRKVAAETLS (87 aa)) adopt a coiled-coil conformation. The segment at 393-420 (MNAFNRRKVAAETLSLSQPLKKDKDKKN) is disordered.

The protein belongs to the TRAFAC class TrmE-Era-EngA-EngB-Septin-like GTPase superfamily. Septin GTPase family.

This chain is Septin-8-A (sept8a), found in Danio rerio (Zebrafish).